The sequence spans 595 residues: UvrABC system protein C (595 aa).

The region spanning 14–91 (NNPGCYLHKD…IQENMPKFNI (78 aa)) is the GIY-YIG domain. The 36-residue stretch at 196-231 (DKIVNQLKAKMKDMSDQMEFERAAEYRDLIEAVSTL) folds into the UVR domain.

It belongs to the UvrC family. As to quaternary structure, interacts with UvrB in an incision complex.

The protein resides in the cytoplasm. The UvrABC repair system catalyzes the recognition and processing of DNA lesions. UvrC both incises the 5' and 3' sides of the lesion. The N-terminal half is responsible for the 3' incision and the C-terminal half is responsible for the 5' incision. This Streptococcus thermophilus (strain ATCC BAA-250 / LMG 18311) protein is UvrABC system protein C.